Here is a 242-residue protein sequence, read N- to C-terminus: Large ribosomal subunit protein uL30y (242 aa).

Belongs to the universal ribosomal protein uL30 family.

This is Large ribosomal subunit protein uL30y (RPL7B) from Arabidopsis thaliana (Mouse-ear cress).